The sequence spans 335 residues: Cell division protein ZipA (335 aa).

Over 1–4 (MDLN) the chain is Periplasmic. Residues 5–25 (AILIILGVIALIILVAHGIWS) traverse the membrane as a helical segment. Over 26-335 (NRREKSQYFE…AERDYLARVS (310 aa)) the chain is Cytoplasmic.

It belongs to the ZipA family. Interacts with FtsZ via their C-terminal domains.

The protein localises to the cell inner membrane. Functionally, essential cell division protein that stabilizes the FtsZ protofilaments by cross-linking them and that serves as a cytoplasmic membrane anchor for the Z ring. Also required for the recruitment to the septal ring of downstream cell division proteins. This Histophilus somni (strain 2336) (Haemophilus somnus) protein is Cell division protein ZipA.